A 1063-amino-acid polypeptide reads, in one-letter code: Probable hemoglobin and hemoglobin-haptoglobin-binding protein 1 (1063 aa).

The signal sequence occupies residues 1–24; the sequence is MTNFKFSLLACSIAFALNASIAYA. 7 consecutive repeat copies span residues 26–29, 30–33, 34–37, 38–41, 42–45, 46–49, and 50–53. The tract at residues 26 to 53 is 7 X 4 AA tandem repeats of Q-P-T-N; it reads QPTNQPTNQPTNQPTNQPTNQPTNQPTN. A compositionally biased stretch (low complexity) spans 28 to 55; the sequence is TNQPTNQPTNQPTNQPTNQPTNQPTNQN. The disordered stretch occupies residues 28–57; it reads TNQPTNQPTNQPTNQPTNQPTNQPTNQNSN. The TonB box motif lies at 63–70; it reads EQINVSGS. A TBDR plug domain is found at 66–200; sequence NVSGSSENIN…LGGSVIFETK (135 aa). The TBDR beta-barrel domain occupies 208–1063; sequence DKDYYLSYKR…NYRMSVQFEF (856 aa). The short motif at 1046–1063 is the TonB C-terminal box element; sequence NRFYAPGRNYRMSVQFEF.

The protein belongs to the TonB-dependent receptor family. Hemoglobin/haptoglobin binding protein subfamily.

It is found in the cell outer membrane. In terms of biological role, acts as a receptor for hemoglobin or the hemoglobin/haptoglobin complex of the human host and is required for heme uptake. The protein is Probable hemoglobin and hemoglobin-haptoglobin-binding protein 1 of Haemophilus influenzae (strain ATCC 51907 / DSM 11121 / KW20 / Rd).